A 363-amino-acid polypeptide reads, in one-letter code: Chalcone synthase B (363 aa).

Cysteine 170 is an active-site residue.

Belongs to the thiolase-like superfamily. Chalcone/stilbene synthases family.

The catalysed reaction is (E)-4-coumaroyl-CoA + 3 malonyl-CoA + 3 H(+) = 2',4,4',6'-tetrahydroxychalcone + 3 CO2 + 4 CoA. It functions in the pathway secondary metabolite biosynthesis; flavonoid biosynthesis. In terms of biological role, the primary product of this enzyme is 4,2',4',6'-tetrahydroxychalcone (also termed naringenin-chalcone or chalcone) which can under specific conditions spontaneously isomerize into naringenin. This chain is Chalcone synthase B (CHSB), found in Ipomoea nil (Japanese morning glory).